Consider the following 518-residue polypeptide: Cytochrome P450 monooxygenase pyr3 (518 aa).

A helical membrane pass occupies residues 26 to 46; it reads GVAIVLFLAPLALHLVSSYLF. Cys458 is a heme binding site.

The protein belongs to the cytochrome P450 family. It depends on heme as a cofactor.

The protein localises to the membrane. It functions in the pathway secondary metabolite biosynthesis; terpenoid biosynthesis. Cytochrome P450 monooxygenase; part of the gene cluster that mediates the biosynthesis of pyripyropene A, a specific human acyl-coenzyme A:cholesterol acyltransferase 2 inhibitor. The first step of the pathway is the synthesis of nicotinyl-CoA from nicotinic acid by the nicotinic acid-CoA ligase pyr1. Nicotinyl-CoA is then a substrate of polyketide synthase pyr2 to produce 4-hydroxy-6-(3-pyridinyl)-2H-pyran-2-one (HPPO) which is further prenylated by the polyprenyl transferase pyr6 to yield farnesyl-HPPO. The next steps consist of an epoxidation of farnesyl-HPPO to epoxyfarnesyl-HPPO by FAD-dependent monooxygenase pyr5 and a cyclization of the terpenoid portion by the terpene cyclase pyr4 to yield deacetyl-pyripyropene E. The 2 cytochrome P450 monooxygenases pyr3 and pyr9, and the 2 acetyltransferases pyr7 and pyr8 are involved in the conversion of deacetyl-pyripyropene E into pyripyropene A through several cycles of oxidation and acetylation steps. Pyr7 acetylates deacetyl-pyripyropene E to pyripyropene E which is oxidized to 11-deacetyl-pyripyropene O by pyr3, which is in turn acetylated into pyripyropene O by pyr8. Pyripyropene O is then oxidized to deacetyl-pyripyropene A by pyr9. Deacetyl-pyripyropene A is finally acetylated to pyripyropene A by pyr8. This Aspergillus fumigatus (strain ATCC MYA-4609 / CBS 101355 / FGSC A1100 / Af293) (Neosartorya fumigata) protein is Cytochrome P450 monooxygenase pyr3.